The sequence spans 163 residues: Type II secretion system protein M (163 aa).

Over 1 to 19 (MMDKLQGWWRSISAREQRL) the chain is Cytoplasmic. The helical transmembrane segment at 20–40 (VAVGGSCLLIGFCYWIVWQPI) threads the bilayer. At 41-163 (ANRIAERERQ…VRRLQLSRPQ (123 aa)) the chain is on the periplasmic side.

The protein belongs to the GSP M family. In terms of assembly, type II secretion system is composed of four main components: the outer membrane complex, the inner membrane complex, the cytoplasmic secretion ATPase and the periplasm-spanning pseudopilus. Forms homodimers. Interacts with ExeL/GspL. Interacts with ExeE/GspE and ExeF/GspF.

The protein resides in the cell inner membrane. In terms of biological role, inner membrane component of the type II secretion system required for the energy-dependent secretion of extracellular factors such as proteases and toxins from the periplasm. Plays a role in the complex assembly and recruits ExeL resulting in a stable complex in the inner membrane. Provides thus a link between the energy-providing ExeE protein in the cytoplasm and the rest of the T2SS machinery. The polypeptide is Type II secretion system protein M (exeM) (Aeromonas hydrophila).